The primary structure comprises 119 residues: DNA-binding protein inhibitor ID-3 (119 aa).

A bHLH domain is found at 28-80 (RGKGPAAEEPLSLLDDMNHCYSRLRELVPGVPRGTQLSQVEILQRVIDYILDL).

As to quaternary structure, homodimer, and heterodimer with other HLH proteins. Interacts with COPS5 and COPS7A. Interacts with IFI204. Interacts with GATA4 and NKX2-5. Interacts with ANKRD2; both proteins cooperate in myoblast differentiation. Interacts with CLOCK and BMAL1.

It localises to the nucleus. Transcriptional regulator (lacking a basic DNA binding domain) which negatively regulates the basic helix-loop-helix (bHLH) transcription factors by forming heterodimers and inhibiting their DNA binding and transcriptional activity. Implicated in regulating a variety of cellular processes, including cellular growth, senescence, differentiation, apoptosis, angiogenesis, and neoplastic transformation. Involved in myogenesis by inhibiting skeletal muscle and cardiac myocyte differentiation and promoting muscle precursor cells proliferation. Inhibits the binding of E2A-containing protein complexes to muscle creatine kinase E-box enhancer. Regulates the circadian clock by repressing the transcriptional activator activity of the CLOCK-BMAL1 heterodimer. This chain is DNA-binding protein inhibitor ID-3 (ID3), found in Canis lupus familiaris (Dog).